A 492-amino-acid polypeptide reads, in one-letter code: Probable cobyric acid synthase (492 aa).

The GATase cobBQ-type domain occupies 252-444; sequence PIEVNIVKFS…FHGILENFEF (193 aa). Residue C330 is the Nucleophile of the active site. H436 is a catalytic residue.

Belongs to the CobB/CobQ family. CobQ subfamily.

It participates in cofactor biosynthesis; adenosylcobalamin biosynthesis. Catalyzes amidations at positions B, D, E, and G on adenosylcobyrinic A,C-diamide. NH(2) groups are provided by glutamine, and one molecule of ATP is hydrogenolyzed for each amidation. In Methanococcus maripaludis (strain C5 / ATCC BAA-1333), this protein is Probable cobyric acid synthase.